A 320-amino-acid chain; its full sequence is MLDFERPIKELEERIAELHRLAGESEGLQAEISRLEEALEAARRRIYTNLSPYQRVQVARHPERPNFRAYRDALCEDFYELSGDRHYGDDAAVRGGFARIRGRNVVLIGHDKGADVKSRVEGNFGMAHPEGYRKVKRLYGLAARFGLPVVTLVDTPGAFAGRGAEERGQAWAISEDLMALAAVPVPVVSVIIGEGGSGGALAMCLADYLGMLENSYLSVIAPEACASIIFRDSSRAPEAAEALKLTARDLKEHGVVDEVLPEPLGGAHRDPEAAIRAVGEALERVLAGVSGSSPEDLLKRRYARYRRIGSYQRLPGPSSG.

The 255-residue stretch at 34-288 (RLEEALEAAR…GEALERVLAG (255 aa)) folds into the CoA carboxyltransferase C-terminal domain.

It belongs to the AccA family. In terms of assembly, acetyl-CoA carboxylase is a heterohexamer composed of biotin carboxyl carrier protein (AccB), biotin carboxylase (AccC) and two subunits each of ACCase subunit alpha (AccA) and ACCase subunit beta (AccD).

It localises to the cytoplasm. The catalysed reaction is N(6)-carboxybiotinyl-L-lysyl-[protein] + acetyl-CoA = N(6)-biotinyl-L-lysyl-[protein] + malonyl-CoA. Its pathway is lipid metabolism; malonyl-CoA biosynthesis; malonyl-CoA from acetyl-CoA: step 1/1. Its function is as follows. Component of the acetyl coenzyme A carboxylase (ACC) complex. First, biotin carboxylase catalyzes the carboxylation of biotin on its carrier protein (BCCP) and then the CO(2) group is transferred by the carboxyltransferase to acetyl-CoA to form malonyl-CoA. In Rubrobacter xylanophilus (strain DSM 9941 / JCM 11954 / NBRC 16129 / PRD-1), this protein is Acetyl-coenzyme A carboxylase carboxyl transferase subunit alpha.